The following is a 431-amino-acid chain: tRNA-specific 2-thiouridylase MnmA (431 aa).

ATP contacts are provided by residues Ala35–Ser42 and Leu61. The active-site Nucleophile is the Cys129. Cys129 and Cys226 are oxidised to a cystine. An ATP-binding site is contributed by Gly153. Residues Arg176–Gln178 are interaction with tRNA. Cys226 serves as the catalytic Cysteine persulfide intermediate. The segment at Pro407–Cys431 is disordered.

Belongs to the MnmA/TRMU family.

The protein resides in the cytoplasm. It carries out the reaction S-sulfanyl-L-cysteinyl-[protein] + uridine(34) in tRNA + AH2 + ATP = 2-thiouridine(34) in tRNA + L-cysteinyl-[protein] + A + AMP + diphosphate + H(+). Functionally, catalyzes the 2-thiolation of uridine at the wobble position (U34) of tRNA, leading to the formation of s(2)U34. This is tRNA-specific 2-thiouridylase MnmA from Beijerinckia indica subsp. indica (strain ATCC 9039 / DSM 1715 / NCIMB 8712).